The following is a 400-amino-acid chain: PHD finger protein 24 (400 aa).

A lipid anchor (N-myristoyl glycine) is attached at glycine 2. The segment covering 29-38 (RDRPSIRRGG) has biased composition (basic and acidic residues). The disordered stretch occupies residues 29–65 (RDRPSIRRGGELPGSRRGTVEGSVQEVQEEKEAEASA). Arginine 36 is subject to Omega-N-methylarginine. Serine 43 is subject to Phosphoserine. Threonine 47 is subject to Phosphothreonine. A Phosphoserine modification is found at serine 51. The PHD-type zinc-finger motif lies at 129–190 (NDEMCDVCEV…TGWSCYYCDN (62 aa)). At arginine 307 the chain carries Omega-N-methylarginine.

This Mus musculus (Mouse) protein is PHD finger protein 24.